Reading from the N-terminus, the 202-residue chain is Adapter protein MecA 2 (202 aa).

It belongs to the MecA family. As to quaternary structure, homodimer.

Enables the recognition and targeting of unfolded and aggregated proteins to the ClpC protease or to other proteins involved in proteolysis. Acts negatively in the development of competence by binding ComK and recruiting it to the ClpCP protease. When overexpressed, inhibits sporulation. Also involved in Spx degradation by ClpC. The chain is Adapter protein MecA 2 (mecA2) from Bacillus anthracis.